The sequence spans 157 residues: Transcription elongation factor GreA (157 aa).

Positions Ser-47–Glu-75 form a coiled coil.

It belongs to the GreA/GreB family.

Necessary for efficient RNA polymerase transcription elongation past template-encoded arresting sites. The arresting sites in DNA have the property of trapping a certain fraction of elongating RNA polymerases that pass through, resulting in locked ternary complexes. Cleavage of the nascent transcript by cleavage factors such as GreA or GreB allows the resumption of elongation from the new 3'terminus. GreA releases sequences of 2 to 3 nucleotides. This Chloroflexus aggregans (strain MD-66 / DSM 9485) protein is Transcription elongation factor GreA.